Here is a 261-residue protein sequence, read N- to C-terminus: Probable 6-phosphogluconolactonase 4 (261 aa).

It belongs to the glucosamine/galactosamine-6-phosphate isomerase family. 6-phosphogluconolactonase subfamily.

The protein resides in the cytoplasm. It is found in the cytosol. The catalysed reaction is 6-phospho-D-glucono-1,5-lactone + H2O = 6-phospho-D-gluconate + H(+). Its pathway is carbohydrate degradation; pentose phosphate pathway; D-ribulose 5-phosphate from D-glucose 6-phosphate (oxidative stage): step 2/3. Functionally, catalyzes the hydrolysis of 6-phosphogluconolactone to 6-phosphogluconate. The sequence is that of Probable 6-phosphogluconolactonase 4 from Arabidopsis thaliana (Mouse-ear cress).